The following is a 282-amino-acid chain: DNA-binding transcriptional repressor YiaJ (282 aa).

A compositionally biased stretch (basic and acidic residues) spans 1–20; the sequence is MGKEVMGKKENEMAQEKERP. The tract at residues 1–21 is disordered; that stretch reads MGKEVMGKKENEMAQEKERPA. The HTH iclR-type domain maps to 23 to 85; it reads SQSLFRGLML…PAAGSYRLTT (63 aa). A DNA-binding region (H-T-H motif) is located at residues 45–64; it reads LAHLSELAGLNKSTVHRLLQ. Residues 100–272 enclose the IclR-ED domain; it reads IIHIAAPHLE…AQAISNELGF (173 aa).

Functionally, negatively controls the transcription of the yiaKLMNOPQRS operon, which may be involved in the utilization of 2,3-diketo-L-gulonate. This Escherichia coli (strain K12) protein is DNA-binding transcriptional repressor YiaJ (yiaJ).